Reading from the N-terminus, the 383-residue chain is Acetylornithine deacetylase (383 aa).

His-80 lines the Zn(2+) pocket. Asp-82 is an active-site residue. Zn(2+) is bound at residue Asp-112. Residue Glu-144 is part of the active site. 3 residues coordinate Zn(2+): Glu-145, Glu-169, and His-355.

Belongs to the peptidase M20A family. ArgE subfamily. As to quaternary structure, homodimer. Requires Zn(2+) as cofactor. It depends on Co(2+) as a cofactor. Glutathione serves as cofactor.

It is found in the cytoplasm. It catalyses the reaction N(2)-acetyl-L-ornithine + H2O = L-ornithine + acetate. Its pathway is amino-acid biosynthesis; L-arginine biosynthesis; L-ornithine from N(2)-acetyl-L-ornithine (linear): step 1/1. In terms of biological role, catalyzes the hydrolysis of the amide bond of N(2)-acetylated L-amino acids. Cleaves the acetyl group from N-acetyl-L-ornithine to form L-ornithine, an intermediate in L-arginine biosynthesis pathway, and a branchpoint in the synthesis of polyamines. The sequence is that of Acetylornithine deacetylase from Pectobacterium carotovorum subsp. carotovorum (strain PC1).